The chain runs to 274 residues: MMPLLLLILLSTRNLLGAAQSQESPVAGERRALDLTTVYVLPRSEPINATVEHKCREALASCYNGSEFQPLHDDGPIRPDPYRFSTMIRFKRSYGELPLPIELNDEFLEQLSLLHNNTDQLRVLLTLMRTSRASDWMSFLGGYTQCDAPKSVVFTCVESVCYEHDLMRLNYTTDLFTENVLGLDVSPPVLSVLVLLRNNHTKAESVVRVPTSSMSMLDGTYNLLRTILGHMSLDTDLIGVLRSYRDRFPAVFSVSDQIKITRQHYRPQYQRKRP.

Positions 1–21 are cleaved as a signal peptide; sequence MMPLLLLILLSTRNLLGAAQS. The gL betaherpesvirus-type domain occupies 51–251; that stretch reads VEHKCREALA…RSYRDRFPAV (201 aa). An intrachain disulfide couples cysteine 156 to cysteine 161.

This sequence belongs to the herpesviridae glycoprotein L (gL) family. Betaherpesvirinae gL subfamily. Interacts with glycoprotein H (gH); this interaction is necessary for the correct processing and cell surface expression of gH.

It localises to the virion membrane. It is found in the host cell membrane. The protein localises to the host Golgi apparatus. The protein resides in the host trans-Golgi network. The heterodimer glycoprotein H-glycoprotein L is required for the fusion of viral and plasma membranes leading to virus entry into the host cell. Acts as a functional inhibitor of gH and maintains gH in an inhibited form. Upon binding to host integrins, gL dissociates from gH leading to activation of the viral fusion glycoproteins gB and gH. This chain is Envelope glycoprotein L, found in Mus musculus (Mouse).